Here is a 107-residue protein sequence, read N- to C-terminus: U1-lycotoxin-Ls1b (107 aa).

The signal sequence occupies residues 1–20 (MMKVLVVVALLATLISYSSS). Residues 21–41 (EGIDDLEADELLSLMANEQTR) constitute a propeptide that is removed on maturation. 4 disulfides stabilise this stretch: cysteine 44/cysteine 59, cysteine 51/cysteine 68, cysteine 58/cysteine 86, and cysteine 70/cysteine 84.

The protein belongs to the neurotoxin 19 (CSTX) family. 04 (U1-Lctx) subfamily. Expressed by the venom gland.

The protein localises to the secreted. The polypeptide is U1-lycotoxin-Ls1b (Lycosa singoriensis (Wolf spider)).